The chain runs to 206 residues: Guanylate kinase (206 aa).

One can recognise a Guanylate kinase-like domain in the interval 6–184 (GILFILSGPS…AVDKVKTIIK (179 aa)). ATP is bound at residue 13 to 20 (GPSGVGKG).

It belongs to the guanylate kinase family.

The protein localises to the cytoplasm. The catalysed reaction is GMP + ATP = GDP + ADP. Functionally, essential for recycling GMP and indirectly, cGMP. In Oceanobacillus iheyensis (strain DSM 14371 / CIP 107618 / JCM 11309 / KCTC 3954 / HTE831), this protein is Guanylate kinase.